The primary structure comprises 161 residues: Small ribosomal subunit protein uS19 (161 aa).

Over residues 1-19 (MARQKKYSGKGGARKKNKQ) the composition is skewed to basic residues. The tract at residues 1-26 (MARQKKYSGKGGARKKNKQKQSVAPR) is disordered.

It belongs to the universal ribosomal protein uS19 family.

Functionally, protein S19 forms a complex with S13 that binds strongly to the 16S ribosomal RNA. The chain is Small ribosomal subunit protein uS19 from Methanococcus maripaludis (strain C6 / ATCC BAA-1332).